The sequence spans 1173 residues: MFVLLVAYALLHIAGCQTTNGLNTSYSVCNGCVGYSENVFAVESGGYIPSDFAFNNWFLLTNTSSVVDGVVRSFQPLLLNCLWSVSGLRFTTGFVYFNGTGRGDCKGFSSDVLSDVIRYNLNFEENLRRGTILFKTSYGVVVFYCTNNTLVSGDAHIPFGTVLGNFYCFVNTTIGNETTSAFVGALPKTVREFVISRTGHFYINGYRYFTLGNVEAVNFNVTTAETTDFCTVALASYADVLVNVSQTSIANIIYCNSVINRLRCDQLSFDVPDGFYSTSPIQSVELPVSIVSLPVYHKHTFIVLYVDFKPQSGGGKCFNCYPAGVNITLANFNETKGPLCVDTSHFTTKYVAVYANVGRWSASINTGNCPFSFGKVNNFVKFGSVCFSLKDIPGGCAMPIVANWAYSKYYTIGSLYVSWSDGDGITGVPQPVEGVSSFMNVTLDKCTKYNIYDVSGVGVIRVSNDTFLNGITYTSTSGNLLGFKDVTKGTIYSITPCNPPDQLVVYQQAVVGAMLSENFTSYGFSNVVELPKFFYASNGTYNCTDAVLTYSSFGVCADGSIIAVQPRNVSYDSVSAIVTANLSIPSNWTTSVQVEYLQITSTPIVVDCSTYVCNGNVRCVELLKQYTSACKTIEDALRNSARLESADVSEMLTFDKKAFTLANVSSFGDYNLSSVIPSLPTSGSRVAGRSAIEDILFSKLVTSGLGTVDADYKKCTKGLSIADLACAQYYNGIMVLPGVADAERMAMYTGSLIGGIALGGLTSAVSIPFSLAIQARLNYVALQTDVLQENQKILAASFNKAMTNIVDAFTGVNDAITQTSQALQTVATALNKIQDVVNQQGNSLNHLTSQLRQNFQAISSSIQAIYDRLDTIQADQQVDRLITGRLAALNVFVSHTLTKYTEVRASRQLAQQKVNECVKSQSKRYGFCGNGTHIFSIVNAAPEGLVFLHTVLLPTQYKDVEAWSGLCVDGTNGYVLRQPNLALYKEGNYYRITSRIMFEPRIPTMADFVQIENCNVTFVNISRSELQTIVPEYIDVNKTLQELSYKLPNYTVPDLVVEQYNQTILNLTSEISTLENKSAELNYTVQKLQTLIDNINSTLVDLKWLNRVETYIKWPWWVWLCISVVLIFVVSMLLLCCCSTGCCGFFSCFASSIRGCCESTKLPYYDVEKIHIQ.

Residues 1–15 (MFVLLVAYALLHIAG) form the signal peptide. Residues 16 to 536 (CQTTNGLNTS…VVELPKFFYA (521 aa)) form an S1 region. Over 16–1115 (CQTTNGLNTS…NRVETYIKWP (1100 aa)) the chain is Virion surface. Positions 417–547 (VSWSDGDGIT…NGTYNCTDAV (131 aa)) are interaction with ANPEP. The tract at residues 417 to 547 (VSWSDGDGIT…NGTYNCTDAV (131 aa)) is interaction with host ANPEP. The interval 537-1173 (SNGTYNCTDA…YYDVEKIHIQ (637 aa)) is S2. The fusion peptide stretch occupies residues 753–773 (IGGIALGGLTSAVSIPFSLAI). The heptad repeat 1 (HR1) stretch occupies residues 767–886 (IPFSLAIQAR…QVDRLITGRL (120 aa)). 2 coiled-coil regions span residues 834 to 878 (QDVV…DQQV) and 1063 to 1105 (TILN…LKWL). The segment at 1031-1127 (PEYIDVNKTL…VWLCISVVLI (97 aa)) is heptad repeat 2 (HR2). The helical transmembrane segment at 1116-1135 (WWVWLCISVVLIFVVSMLLL) threads the bilayer. Topologically, residues 1136 to 1173 (CCCSTGCCGFFSCFASSIRGCCESTKLPYYDVEKIHIQ) are intravirion. Positions 1169 to 1173 (KIHIQ) match the KxHxx motif.

Belongs to the alphacoronaviruses spike protein family. In terms of assembly, homotrimer. During virus morphogenesis, found in a complex with M and HE proteins. Interacts with host ANPEP.

Its subcellular location is the virion membrane. The protein resides in the host endoplasmic reticulum-Golgi intermediate compartment membrane. Its function is as follows. S1 region attaches the virion to the cell membrane by interacting with host ANPEP/aminopeptidase N, initiating the infection. Binding to the receptor probably induces conformational changes in the S glycoprotein unmasking the fusion peptide of S2 region and activating membranes fusion. S2 region belongs to the class I viral fusion protein. Under the current model, the protein has at least 3 conformational states: pre-fusion native state, pre-hairpin intermediate state, and post-fusion hairpin state. During viral and target cell membrane fusion, the coiled coil regions (heptad repeats) regions assume a trimer-of-hairpins structure, positioning the fusion peptide in close proximity to the C-terminal region of the ectodomain. The formation of this structure appears to drive apposition and subsequent fusion of viral and target cell membranes. This chain is Spike glycoprotein, found in Human coronavirus 229E (HCoV-229E).